We begin with the raw amino-acid sequence, 237 residues long: Uridylate kinase (237 aa).

Position 11–14 (11–14 (KLSG)) interacts with ATP. Gly-53 is a UMP binding site. Residues Gly-54 and Arg-58 each coordinate ATP. Residues Asp-73 and 134–141 (TGNPFFTT) contribute to the UMP site. 3 residues coordinate ATP: Thr-161, Tyr-167, and Asp-170.

The protein belongs to the UMP kinase family. As to quaternary structure, homohexamer.

Its subcellular location is the cytoplasm. It catalyses the reaction UMP + ATP = UDP + ADP. Its pathway is pyrimidine metabolism; CTP biosynthesis via de novo pathway; UDP from UMP (UMPK route): step 1/1. With respect to regulation, inhibited by UTP. Catalyzes the reversible phosphorylation of UMP to UDP. The protein is Uridylate kinase of Burkholderia cenocepacia (strain HI2424).